A 620-amino-acid polypeptide reads, in one-letter code: Chaperone protein HscA homolog (620 aa).

This sequence belongs to the heat shock protein 70 family.

Functionally, chaperone involved in the maturation of iron-sulfur cluster-containing proteins. Has a low intrinsic ATPase activity which is markedly stimulated by HscB. This Acinetobacter baylyi (strain ATCC 33305 / BD413 / ADP1) protein is Chaperone protein HscA homolog.